A 188-amino-acid chain; its full sequence is UPF0301 protein XCV3063 (188 aa).

It belongs to the UPF0301 (AlgH) family.

The polypeptide is UPF0301 protein XCV3063 (Xanthomonas euvesicatoria pv. vesicatoria (strain 85-10) (Xanthomonas campestris pv. vesicatoria)).